Reading from the N-terminus, the 229-residue chain is UPF0758 protein Ppro_3582 (229 aa).

Residues 1–20 (MCPGIREWPEDERPREKMLR) are disordered. Residues 7-19 (EWPEDERPREKML) are compositionally biased toward basic and acidic residues. One can recognise an MPN domain in the interval 107 to 229 (RFTSPRQVFD…YLSFVERGVL (123 aa)). Positions 178, 180, and 191 each coordinate Zn(2+). The JAMM motif motif lies at 178–191 (HNHPTGDPTPSQED).

Belongs to the UPF0758 family.

This is UPF0758 protein Ppro_3582 from Pelobacter propionicus (strain DSM 2379 / NBRC 103807 / OttBd1).